A 557-amino-acid polypeptide reads, in one-letter code: Fatty acyl-CoA hydrolase precursor, medium chain (557 aa).

The signal sequence occupies residues 1–25; that stretch reads MATEKNTLLSLILTAGITALVATGQ. Cysteine 93 and cysteine 122 are disulfide-bonded. Residue serine 227 is the Acyl-ester intermediate of the active site. Residues glutamate 345 and histidine 460 each act as charge relay system in the active site. Asparagine 476 carries N-linked (GlcNAc...) asparagine glycosylation.

This sequence belongs to the type-B carboxylesterase/lipase family. As to expression, highest levels in uropygial gland, much lower in liver and kidney.

Fatty acid biosynthesis chain termination and release of the free fatty acid product is achieved by hydrolysis of the thio ester by a thioesterase. This thioesterase may be associated with peroxisome proliferation and may play a role in the production of 3-hydroxy fatty acid diester pheromones. The chain is Fatty acyl-CoA hydrolase precursor, medium chain from Anas platyrhynchos (Mallard).